Reading from the N-terminus, the 754-residue chain is Nibrin (754 aa).

The 60-residue stretch at 24 to 83 folds into the FHA domain; that stretch reads YVVGRKNCAILIENDQSISRNHAVLTANFSVTNLSQTDEIPVLTLKDNSKYGTFVNEEKM. BRCT domains are found at residues 105 to 181 and 224 to 315; these read KFRI…TEFL and GKTF…LAVI. The mediates interaction with SP100 stretch occupies residues 111–328; the sequence is EPLVACSSCL…TKNYCDPQGH (218 aa). Residues 221–402 are interaction with MTOR, MAPKAP1 and RICTOR; sequence IFKGKTFIFL…FRMLSQDAPT (182 aa). Ser-278 is subject to Phosphoserine; by ATM. The disordered stretch occupies residues 326–346; that stretch reads QGHPSTGLKTTTPGPSLSQGV. Residues 328–346 are compositionally biased toward polar residues; it reads HPSTGLKTTTPGPSLSQGV. Thr-337 carries the phosphothreonine modification. Residue Ser-343 is modified to Phosphoserine; by ATM. Ser-347 bears the Phosphoserine mark. Lys-388 carries the post-translational modification N6-lactoyllysine. Disordered stretches follow at residues 396-415 and 430-478; these read LSQD…NNNS and QLSP…MSSC. Ser-397 carries the phosphoserine modification. Thr-402 carries the phosphothreonine modification. Polar residues-rich tracts occupy residues 430–440 and 447–462; these read QLSPTKLPSIN and SQQQ…FQPS. Ser-432 carries the post-translational modification Phosphoserine; by CDK2. Lys-435 participates in a covalent cross-link: Glycyl lysine isopeptide (Lys-Gly) (interchain with G-Cter in ubiquitin). The Nuclear localization signal motif lies at 461 to 467; it reads PSTKKRE. A phosphoserine mark is found at Ser-509 and Ser-518. Residues Lys-529, Lys-571, and Lys-582 each participate in a glycyl lysine isopeptide (Lys-Gly) (interchain with G-Cter in SUMO2) cross-link. A phosphoserine mark is found at Ser-615 and Ser-673. Residues Lys-686, Lys-690, and Lys-735 each participate in a glycyl lysine isopeptide (Lys-Gly) (interchain with G-Cter in ubiquitin) cross-link. Positions 740 to 749 match the FxF/Y motif motif; it reads ADDLFRYNPY.

The protein belongs to the Nibrin family. Component of the MRN complex composed of two heterodimers RAD50 and MRE11 associated with a single NBN. The MRN complexes dimerize on DNA to form joined MRN-MRN oligomers required for DNA double-strand break repair. As part of the MRN complex, interacts with MCM9; the interaction recruits the complex to DNA repair sites. Component of the BASC complex, at least composed of BRCA1, MSH2, MSH6, MLH1, ATM, BLM, RAD50, MRE11 and NBN. Interacts with histone H2AX; this requires phosphorylation of H2AX on 'Ser-139' and promotes NBN recruitment to DNA damage sites. Interacts with (phosphorylated) MDC1; promoting NBN recruitment to DNA damage sites. Interacts with (phosphorylated) RAD17; promoting NBN recruitment to DNA damage sites. Interacts (via FxF/Y motif) with ATM. Interacts with HJURP. Interacts with INTS3. Interacts with KPNA2. Interacts with TERF2; interaction is disrupted upon NBN phosphorylation by CDK2. Interacts with (phosphorylated) RBBP8/CtIP; the interaction links the role of the MRN complex in DNA double-strand break sensing to resection. Interacts with SP100; recruits NBN to PML bodies. Interacts with ATF2. Interacts with MTOR, MAPKAP1 isoform 2 and RICTOR; indicative for an association with the mTORC2 complex. Interacts with MRNIP. Interacts with UFL1; promoting UFL1 recruitment to double-strand breaks following DNA damage. Interacts with CYREN (via XLF motif). As to quaternary structure, (Microbial infection) Interacts with herpes simplex virus 1 protein UL12. Post-translationally, phosphorylated by ATM in response of ionizing radiation, and such phosphorylation is responsible intra-S phase checkpoint control and telomere maintenance. Phosphorylated at Ser-432 by CDK2 in S/G2 phases abolishes interaction with TERF2, enabling DCLRE1B/Apollo recruitment to telomeres. Phosphorylation at Ser-432 in response to dysfunctional telomeres promotes non-homologous end joining repair at telomeres, while dephosphorylation by PPP1CA promotes microhomology-mediated end-joining (MMEJ) repair. In terms of processing, ubiquitinated at Lys-435 via 'Lys-6'-linked ubiquitin chains by RNF8, promoting NBN recruitment to DNA double-strand breaks (DSBs). Ubiquitinated at Lys-686 and Lys-689 via 'Lys-63'-linked ubiquitin chains by PELI1: ubiquitination takes place following PELI1 phosphorylation and promotes ATM activation and DNA repair. Ubiquitinated at Lys-735 via 'Lys-63'-linked ubiquitin chains by the SCF(SKP2) complex: ubiquitination takes place following SKP2 phosphorylation and promotes ATM activation and DNA repair. Lactylation at Lys-388 by KAT5 in response to DNA damage promotes recruitment of the MRN complex to DNA damage sites. Delactylated by HDAC3. In terms of tissue distribution, ubiquitous. Expressed at high levels in testis.

The protein resides in the nucleus. Its subcellular location is the chromosome. It is found in the PML body. It localises to the telomere. Its function is as follows. Component of the MRN complex, which plays a central role in double-strand break (DSB) repair, DNA recombination, maintenance of telomere integrity and meiosis. The MRN complex is involved in the repair of DNA double-strand breaks (DSBs) via homologous recombination (HR), an error-free mechanism which primarily occurs during S and G2 phases. The complex (1) mediates the end resection of damaged DNA, which generates proper single-stranded DNA, a key initial steps in HR, and is (2) required for the recruitment of other repair factors and efficient activation of ATM and ATR upon DNA damage. The MRN complex possesses single-strand endonuclease activity and double-strand-specific 3'-5' exonuclease activity, which are provided by MRE11, to initiate end resection, which is required for single-strand invasion and recombination. Within the MRN complex, NBN acts as a protein-protein adapter, which specifically recognizes and binds phosphorylated proteins, promoting their recruitment to DNA damage sites. Recruits MRE11 and RAD50 components of the MRN complex to DSBs in response to DNA damage. Promotes the recruitment of PI3/PI4-kinase family members ATM, ATR, and probably DNA-PKcs to the DNA damage sites, activating their functions. Mediates the recruitment of phosphorylated RBBP8/CtIP to DSBs, leading to cooperation between the MRN complex and RBBP8/CtIP to initiate end resection. RBBP8/CtIP specifically promotes the endonuclease activity of the MRN complex to clear DNA ends containing protein adducts. The MRN complex is also required for the processing of R-loops. NBN also functions in telomere length maintenance via its interaction with TERF2: interaction with TERF2 during G1 phase preventing recruitment of DCLRE1B/Apollo to telomeres. NBN also promotes DNA repair choice at dysfunctional telomeres: NBN phosphorylation by CDK2 promotes non-homologous end joining repair at telomeres, while unphosphorylated NBN promotes microhomology-mediated end-joining (MMEJ) repair. Enhances AKT1 phosphorylation possibly by association with the mTORC2 complex. In Homo sapiens (Human), this protein is Nibrin.